A 507-amino-acid chain; its full sequence is MKNISAGHNALMVLGTSSGAGKSIITTAICRSLLRKGEVPIPFKGQNMSNNAWVDINNGEMAYSQAVQAWAAGIEPICAMNPVLLKPQGDCTSEVIHLGKSVGVVQAANYYEDWFSSGWEAIQKGLNDIATSYKKHRLILEGAGSPVEINLQHRDLTNLKLAKHLNAKCVLVADIERGGVFAQIIGTLALLKPDEKALIQGIIINRFRGDISLFEKGRQWIEEESKIPVLGIMPWLNEIFPPEDSLDLLERKHKKTKAEIQIAVIKLPSLSNFADLDPLEAEPTIQLNWIQPGDYLGNPNAVIIPGSKQTLKDLQSLQSSGLGNQIKEFASSGGTVFGICGGLQILGEKLEDPLGIEQSFLETSISELEGLSLIPIKTIFHSKKSLTKKDVISKWPDESRIMGFELHHGESTPTNSQKVKVKDLCNETSLGWVNEECNPIKAAGTYLHGIFDNGTWRRLWINQIRKKANLYELPLLEENHDAKREKVINRLTDVFEENINLEYLLKT.

The GATase cobBQ-type domain maps to 259–456; the sequence is EIQIAVIKLP…LHGIFDNGTW (198 aa). Catalysis depends on cysteine 340, which acts as the Nucleophile. Residue histidine 448 is part of the active site.

It belongs to the CobB/CobQ family. CobQ subfamily.

It participates in cofactor biosynthesis; adenosylcobalamin biosynthesis. Its function is as follows. Catalyzes amidations at positions B, D, E, and G on adenosylcobyrinic A,C-diamide. NH(2) groups are provided by glutamine, and one molecule of ATP is hydrogenolyzed for each amidation. The polypeptide is Cobyric acid synthase (Prochlorococcus marinus (strain SARG / CCMP1375 / SS120)).